The following is a 264-amino-acid chain: Apolipoprotein A-I (264 aa).

An N-terminal signal peptide occupies residues 1–18; sequence MKTVVLAVAVLFLTGSQA. 2 consecutive repeat copies span residues 67-88 and 89-110. The 10 X approximate tandem repeats stretch occupies residues 67–264; the sequence is LNLLENWDTL…EEASKKLNAQ (198 aa). A Methionine sulfoxide modification is found at M109. Residues 111–121 form a 3; half-length repeat; sequence KDLEEVKAKVQ. 5 repeat units span residues 122–143, 144–165, 166–187, 188–207, and 208–229. M193 is modified (methionine sulfoxide). Residues 230-240 form a 9; half-length repeat; sequence PALEDLRQGLM. M240 is modified (methionine sulfoxide). Repeat 10 spans residues 241–264; it reads PVFESFKTRIMSMVEEASKKLNAQ.

This sequence belongs to the apolipoprotein A1/A4/E family. Homodimer. Interacts with APOA1BP and CLU. Component of a sperm activating protein complex (SPAP), consisting of APOA1, an immunoglobulin heavy chain, an immunoglobulin light chain and albumin. Interacts with NDRG1. Interacts with SCGB3A2. Interacts with NAXE and YJEFN3. In terms of processing, glycosylated. Post-translationally, palmitoylated. Phosphorylation sites are present in the extracellular medium. As to expression, major protein of plasma HDL, also found in chylomicrons.

It is found in the secreted. Participates in the reverse transport of cholesterol from tissues to the liver for excretion by promoting cholesterol efflux from tissues and by acting as a cofactor for the lecithin cholesterol acyltransferase (LCAT). As part of the SPAP complex, activates spermatozoa motility. In Mesocricetus auratus (Golden hamster), this protein is Apolipoprotein A-I (APOAI).